The sequence spans 233 residues: Small ribosomal subunit protein uS2 (233 aa).

The protein belongs to the universal ribosomal protein uS2 family.

The sequence is that of Small ribosomal subunit protein uS2 from Bacillus cereus (strain G9842).